A 1121-amino-acid polypeptide reads, in one-letter code: Peroxisomal ATPase PEX1 (1121 aa).

Disordered stretches follow at residues 187 to 221 (SISS…NNGE) and 1099 to 1121 (SGRD…STLM). Positions 205 to 217 (SSTSTATGRRSVT) are enriched in low complexity.

It belongs to the AAA ATPase family. As to quaternary structure, interacts with PEX6; forming the PEX1-PEX6 AAA ATPase complex, which is composed of a heterohexamer formed by a trimer of PEX1-PEX6 dimers.

The protein localises to the membrane. It catalyses the reaction ATP + H2O = ADP + phosphate + H(+). Its function is as follows. Component of the PEX1-PEX6 AAA ATPase complex involved in peroxisome biosynthesis. The complex acts as a protein dislocase complex that mediates the ATP-dependent extraction of the PEX5 receptor from peroxisomal membranes, an essential step for PEX5 recycling. Specifically recognizes PEX5 monoubiquitinated at 'Cys-6', and pulls it out of the peroxisome lumen through the PEX2-PEX10-PEX12 retrotranslocation channel. Extraction by the PEX1-PEX6 AAA ATPase complex is accompanied by unfolding of the TPR repeats and release of bound cargo from PEX5. The polypeptide is Peroxisomal ATPase PEX1 (Komagataella phaffii (strain GS115 / ATCC 20864) (Yeast)).